The following is an 820-amino-acid chain: MMLRWSGIWGLYPPRIFPSLLVVVALVGLLPVLRSHGLQLNPTASTIRGSEPPRERSIGDVTTAPSEPLHHPDDRNLTNLYIEHGAKPVRKAFPVLDIDYLHVRTPFEISLWILLACLMKIGFHVIPTISSIVPESCLLIVVGLLVGGLIKGVGETPPFLQSDVFFLFLLPPIILDAGYFLPLRQFTENLGTILIFAVVGTLWNAFFLGGLLYAVCLVGGEQINNIGLLDTLLFGSIISAVDPVAVLAVFEEIHINELLHILVFGESLLNDAVTVVLYHLFEEFASYEYVGISDIFLGFLSFFVVSLGGVFVGVVYGVIAAFTSRFTSHIRVIEPLFVFLYSYMAYLSAELFHLSGIMALIASGVVMRPYVEANISHKSHTTIKYFLKMWSSVSETLIFIFLGVSTVAGSHQWNWTFVISTLLFCLIARVLGVLVLTWFINKFRIVKLTPKDQFIIAYGGLRGAIAFSLGYLLDKKHFPMCDLFLTAIITVIFFTVFVQGMTIRPLVDLLAVKKKQETKRSINEEIHTQFLDHLLTGIEDICGHYGHHHWKDKLNRFNKKYVKKCLIAGERSKEPQLIAFYHKMEMKQAIELVESGGMGKIPSAVSTVSMQNIHPKSAASERILPALSKDKEEEIRKILRSNLQKTRQRLRSYNRHTLVADPYEEAWNQMLLRRQKARQLEQKITNYLTVPAHKLDSPTMSRARIGSDPLAYEPKADLPVITIDPASPQSPESVDLVNEELKGKVLGLKRGPRTTPEEEEEDEDGVIMIRSKEPSSPGTDDVFTPGPSDSPGSQRIQRCLSDPGPHPEPGEGEPFIPKGQ.

Residues 1-102 (MMLRWSGIWG…FPVLDIDYLH (102 aa)) lie on the Extracellular side of the membrane. The interval 44–71 (ASTIRGSEPPRERSIGDVTTAPSEPLHH) is disordered. Residues 103-125 (VRTPFEISLWILLACLMKIGFHV) form a helical membrane-spanning segment. The Cytoplasmic segment spans residues 126 to 134 (IPTISSIVP). The helical transmembrane segment at 135–152 (ESCLLIVVGLLVGGLIKG) threads the bilayer. The Extracellular portion of the chain corresponds to 153–162 (VGETPPFLQS). Residues 163-180 (DVFFLFLLPPIILDAGYF) traverse the membrane as a helical segment. At 181–190 (LPLRQFTENL) the chain is on the cytoplasmic side. Residues 191-219 (GTILIFAVVGTLWNAFFLGGLLYAVCLVG) traverse the membrane as a helical segment. Residues 220 to 226 (GEQINNI) lie on the Extracellular side of the membrane. The chain crosses the membrane as a helical span at residues 227-253 (GLLDTLLFGSIISAVDPVAVLAVFEEI). The Cytoplasmic segment spans residues 254–256 (HIN). A helical membrane pass occupies residues 257–287 (ELLHILVFGESLLNDAVTVVLYHLFEEFASY). Residues 288 to 291 (EYVG) lie on the Extracellular side of the membrane. Residues 292-326 (ISDIFLGFLSFFVVSLGGVFVGVVYGVIAAFTSRF) form a helical membrane-spanning segment. Topologically, residues 327–332 (TSHIRV) are cytoplasmic. The helical transmembrane segment at 333–345 (IEPLFVFLYSYMA) threads the bilayer. Residues 346–354 (YLSAELFHL) are Extracellular-facing. The chain crosses the membrane as a helical span at residues 355-375 (SGIMALIASGVVMRPYVEANI). The Cytoplasmic segment spans residues 376–377 (SH). The helical transmembrane segment at 378–408 (KSHTTIKYFLKMWSSVSETLIFIFLGVSTVA) threads the bilayer. Residues 409–414 (GSHQWN) lie on the Extracellular side of the membrane. A helical transmembrane segment spans residues 415–442 (WTFVISTLLFCLIARVLGVLVLTWFINK). Residues 443 to 448 (FRIVKL) are Cytoplasmic-facing. Residues 449–473 (TPKDQFIIAYGGLRGAIAFSLGYLL) traverse the membrane as a helical segment. Residues 474-479 (DKKHFP) lie on the Extracellular side of the membrane. A helical membrane pass occupies residues 480-509 (MCDLFLTAIITVIFFTVFVQGMTIRPLVDL). The interaction with TESC stretch occupies residues 505–571 (PLVDLLAVKK…VKKCLIAGER (67 aa)). Residues 510–820 (LAVKKKQETK…EGEPFIPKGQ (311 aa)) lie on the Cytoplasmic side of the membrane. The PI(4,5)P2-binding region stretch occupies residues 513–520 (KKKQETKR). Positions 519–549 (KRSINEEIHTQFLDHLLTGIEDICGHYGHHH) are interaction with CHP2. The segment at 544–549 (HYGHHH) is confers pH-dependent PI(4,5)P2 binding. Residues 556–564 (RFNKKYVKK) are PI(4,5)P2-binding region. Phosphoserine is present on residues serine 603 and serine 606. Threonine 607 bears the Phosphothreonine mark. 2 positions are modified to phosphoserine: serine 609 and serine 652. Residues 637 to 820 (KILRSNLQKT…EGEPFIPKGQ (184 aa)) form an interaction with TESC region. The interval 637 to 820 (KILRSNLQKT…EGEPFIPKGQ (184 aa)) is interaction with CALM1. An interaction with PPP3CA region spans residues 688–691 (LTVP). Phosphoserine is present on residues serine 697, serine 701, and serine 707. The interaction with PPP3CA stretch occupies residues 719–724 (PVITID). 3 positions are modified to phosphoserine: serine 727, serine 730, and serine 733. The interval 747–820 (GLKRGPRTTP…EGEPFIPKGQ (74 aa)) is disordered. Phosphothreonine is present on residues threonine 755 and threonine 784. Serine 790 and serine 801 each carry phosphoserine.

Belongs to the monovalent cation:proton antiporter 1 (CPA1) transporter (TC 2.A.36) family. Homodimer; dimerization is crucial for its function. Oligomer. Interacts with CALM1 in a calcium-dependent manner. Interacts with TESC. Interacts (via residues 504-563) with CHP1. The interaction with CHP1 occurs at the plasma membrane in a calcium-dependent manner. Interacts with CHP2. The interaction with CHP2 occurs in a calcium-dependent manner. Interacts with EZR; regulates the cytoskeletal interactions of SLC9A1 and promotes stress fiber formation. In terms of processing, N-glycosylated and O-glycosylated in the N-terminal region. Ubiquitinated, leading to its degradation by the proteasome. Ubiquitination is reduced by CHP1. Post-translationally, palmitoylated; may play a major role in SLC9A1 regulation. In terms of processing, phosphorylation at Thr-784 increases SLC9A1 activity; specifically dephosphorylated by PPP3CA. Specifically dephosphorylated at Thr-784 by PPP3CA that negatively regulates SLC9A1 activity. Phosphorylation at Ser-652 by AKT1 reduces SLC9A1 binding to CALM1. As to expression, widely expressed.

It localises to the cell membrane. Its subcellular location is the basolateral cell membrane. The catalysed reaction is Na(+)(in) + H(+)(out) = Na(+)(out) + H(+)(in). It carries out the reaction Li(+)(out) + H(+)(in) = Li(+)(in) + H(+)(out). The enzyme catalyses Li(+)(in) + Na(+)(out) = Li(+)(out) + Na(+)(in). Activated at acidic pHs. Inhibited by cariporide and eniporide. Inhibited by amiloride and 5-amino-substituted derivatives. Phosphatidylinositol 4,5-bisphosphate (PI(4,5)P2) bind and activates SLC9A1 transporter activity. Its function is as follows. Electroneutral Na(+) /H(+) antiporter that extrudes Na(+) in exchange for external protons driven by the inward sodium ion chemical gradient, protecting cells from acidification that occurs from metabolism. Exchanges intracellular H(+) ions for extracellular Na(+) in 1:1 stoichiometry. Plays a key role in maintening intracellular pH neutral and cell volume, and thus is important for cell growth, proliferation, migration and survival. In addition, can transport lithium Li(+) and also functions as a Na(+)/Li(+) antiporter. SLC9A1 also functions in membrane anchoring and organization of scaffolding complexes that coordinate signaling inputs. The polypeptide is Sodium/hydrogen exchanger 1 (Slc9a1) (Rattus norvegicus (Rat)).